The following is a 211-amino-acid chain: MALGLIGKKVGMTRLFDQESGAMVPVTVIDVKGNTFAQIKTEDKDGYNAIQVAFDAQKESRVAKPQAGHFKKLGIQPTKLLKEFRVEASELPAEGAKDPGVDLFSAGQWVDVIGTSKGKGFQGAMRRHNFHGSPAAHGSMMHRRTGGVGGCSTPGRVWKNQKMPGQMGNAKRTVQNLKVVAVRPEDNVILISGAVPGARGSYLVIRPAKKK.

Belongs to the universal ribosomal protein uL3 family. In terms of assembly, part of the 50S ribosomal subunit. Forms a cluster with proteins L14 and L19.

In terms of biological role, one of the primary rRNA binding proteins, it binds directly near the 3'-end of the 23S rRNA, where it nucleates assembly of the 50S subunit. The protein is Large ribosomal subunit protein uL3 of Akkermansia muciniphila (strain ATCC BAA-835 / DSM 22959 / JCM 33894 / BCRC 81048 / CCUG 64013 / CIP 107961 / Muc).